The following is a 506-amino-acid chain: Probable alpha-L-arabinofuranosidase B (506 aa).

The N-terminal stretch at 1 to 26 (MSSGLSLERACAVALGIVASASLVAA) is a signal peptide. A catalytic region spans residues 27–343 (GPCDIYSSGG…ADIVAAKYAI (317 aa)). Cystine bridges form between Cys29-Cys39, Cys89-Cys94, and Cys184-Cys185. Asn91 carries N-linked (GlcNAc...) asparagine glycosylation. Asp227 provides a ligand contact to substrate. The Nucleophile role is filled by Glu229. Residues Asn230 and Gly304 each contribute to the substrate site. Asp305 functions as the Proton donor in the catalytic mechanism. Residues 344 to 506 (ASLTSGPALT…VSWVVSTGFA (163 aa)) form an ABD region. Cys409 and Cys447 are oxidised to a cystine. His424, Asn426, Phe427, Asp443, His471, Glu473, Leu476, and Asp496 together coordinate substrate.

Belongs to the glycosyl hydrolase 54 family.

It localises to the secreted. The enzyme catalyses Hydrolysis of terminal non-reducing alpha-L-arabinofuranoside residues in alpha-L-arabinosides.. Its pathway is glycan metabolism; L-arabinan degradation. Alpha-L-arabinofuranosidase involved in the degradation of arabinoxylan, a major component of plant hemicellulose. Able to hydrolyze 1,5-, 1,3- and 1,2-alpha-linkages not only in L-arabinofuranosyl oligosaccharides, but also in polysaccharides containing terminal non-reducing L-arabinofuranoses in side chains, like L-arabinan, arabinogalactan and arabinoxylan. The sequence is that of Probable alpha-L-arabinofuranosidase B (abfB) from Aspergillus flavus (strain ATCC 200026 / FGSC A1120 / IAM 13836 / NRRL 3357 / JCM 12722 / SRRC 167).